Consider the following 407-residue polypeptide: Imidazolonepropionase (407 aa).

Positions 74 and 76 each coordinate Fe(3+). Positions 74 and 76 each coordinate Zn(2+). Residues Arg83, Tyr146, and His179 each contribute to the 4-imidazolone-5-propanoate site. Residue Tyr146 participates in N-formimidoyl-L-glutamate binding. Fe(3+) is bound at residue His244. His244 contacts Zn(2+). Gln247 contacts 4-imidazolone-5-propanoate. Asp319 serves as a coordination point for Fe(3+). Position 319 (Asp319) interacts with Zn(2+). N-formimidoyl-L-glutamate-binding residues include Asn321 and Gly323. Thr324 contacts 4-imidazolone-5-propanoate.

Belongs to the metallo-dependent hydrolases superfamily. HutI family. Zn(2+) is required as a cofactor. The cofactor is Fe(3+).

Its subcellular location is the cytoplasm. It catalyses the reaction 4-imidazolone-5-propanoate + H2O = N-formimidoyl-L-glutamate. It participates in amino-acid degradation; L-histidine degradation into L-glutamate; N-formimidoyl-L-glutamate from L-histidine: step 3/3. Functionally, catalyzes the hydrolytic cleavage of the carbon-nitrogen bond in imidazolone-5-propanoate to yield N-formimidoyl-L-glutamate. It is the third step in the universal histidine degradation pathway. This is Imidazolonepropionase from Salmonella agona (strain SL483).